Here is a 434-residue protein sequence, read N- to C-terminus: MNYVTFNQDYSCLAVGTAKGFRIYHTEPFSKIFTGDNENVTIIEMLFSTSLVAIKQSPRHIVIQNTKRGTVICELTFPSAVLAVRLNRKRFAVLLEEEIYLYDIQNMGLLYTISTSANPNAICSLSASSDNCYLAYPLPKPREETGDKRPAHAPPLSPYVAPTSGEVLIFDAKSLKAVNVIEAHRAPLSCIALNNDGTLLATASETGTIIRVFSVPDGQKLYQFRRGTYPSSIFSLSFNMSSTLLCVSSNSDTIHIFRLGGPVTGLPESPQSPGDKDKWRRSRSFDSENGSPPAGISPGSEMADVPAEKSKSSGTFGSMIRRSSQMVGKGVAGVVGGYLPQAVTEMWEPARDFAFIKLPKGGMGVTPRSGPVKSVVAMSSSSPQVMVVTSDGGFYIYSIDMETGGEGVLVKQYSVLESDDSLEPPPINYVSYRT.

3 WD repeats span residues 1–34 (MNYVTFNQDYSCLAVGTAKGFRIYHTEPFSKIFT), 183–223 (AHRA…KLYQ), and 228–267 (TYPSSIFSLSFNMSSTLLCVSSNSDTIHIFRLGGPVTGLP). A L/FRRG motif motif is present at residues 224 to 228 (FRRGT). The disordered stretch occupies residues 262–318 (PVTGLPESPQSPGDKDKWRRSRSFDSENGSPPAGISPGSEMADVPAEKSKSSGTFGS). The span at 274–286 (GDKDKWRRSRSFD) shows a compositional bias: basic and acidic residues. One copy of the WD 4 repeat lies at 367–407 (PRSGPVKSVVAMSSSSPQVMVVTSDGGFYIYSIDMETGGEG).

This sequence belongs to the WD repeat PROPPIN family. Component of the PI(3,5)P2 regulatory complex.

The protein localises to the preautophagosomal structure membrane. It is found in the vacuole membrane. It localises to the endosome membrane. The PI(3,5)P2 regulatory complex regulates both the synthesis and turnover of phosphatidylinositol 3,5-bisphosphate (PtdIns(3,5)P2). Necessary for proper vacuole morphology. Plays an important role in osmotically-induced vacuole fragmentation. Required for cytoplasm to vacuole transport (Cvt) vesicle formation, pexophagy and starvation-induced autophagy. Involved in correct atg9 trafficking to the pre-autophagosomal structure. Might also be involved in premeiotic DNA replication. In Botryotinia fuckeliana (strain B05.10) (Noble rot fungus), this protein is Autophagy-related protein 18 (atg18).